The sequence spans 181 residues: Inner membrane-spanning protein YciB (181 aa).

Transmembrane regions (helical) follow at residues 22–42 (IYTATGALIVATAVQLILTYV), 50–70 (MQLITFIMVTVFGGMTIFLHD), 80–100 (IVYAVFAAGLIIAQILGRPII), 118–138 (INYAWILFFTACSIANLYVAF), and 148–168 (FKVFGLLGLTFIYTLLTGMYV).

The protein belongs to the YciB family.

The protein resides in the cell inner membrane. Functionally, plays a role in cell envelope biogenesis, maintenance of cell envelope integrity and membrane homeostasis. The sequence is that of Inner membrane-spanning protein YciB from Aliivibrio salmonicida (strain LFI1238) (Vibrio salmonicida (strain LFI1238)).